A 251-amino-acid chain; its full sequence is MHILLSNDDGYAAPGLRALAAALSPLAKITVVAPERNRSGASNSLTLERPLRATRAENGFIRVDGTPTDCVHLAITGLLDSEPDMVFAGINHGANLGDDVIYSGTVAAATEGRFLGLPAVAISLAAHNPEHFETAAQVAIELLERIRENPLPADTILNVNVPDIPPDELRGYRATRLGARHKAEAVVRTRDPRGREIFWVGCAGPEADAGPGTDFHAIRQNCVSVTPLQIDLTRYERLDQLGAWLPGRVTA.

A divalent metal cation is bound by residues Asp8, Asp9, Ser39, and Asn91.

Belongs to the SurE nucleotidase family. It depends on a divalent metal cation as a cofactor.

The protein localises to the cytoplasm. The enzyme catalyses a ribonucleoside 5'-phosphate + H2O = a ribonucleoside + phosphate. Its function is as follows. Nucleotidase that shows phosphatase activity on nucleoside 5'-monophosphates. This chain is 5'-nucleotidase SurE, found in Methylococcus capsulatus (strain ATCC 33009 / NCIMB 11132 / Bath).